The sequence spans 295 residues: Zinc finger C2H2 protein ECU08_0560 (295 aa).

C2H2-type zinc fingers lie at residues 219–243 (FVCT…NLMH) and 249–273 (HKCR…YKVH).

The protein is Zinc finger C2H2 protein ECU08_0560 of Encephalitozoon cuniculi (strain GB-M1) (Microsporidian parasite).